The sequence spans 576 residues: Phosphoenolpyruvate-protein phosphotransferase (576 aa).

Histidine 189 acts as the Tele-phosphohistidine intermediate in catalysis. Phosphoenolpyruvate is bound by residues arginine 296 and arginine 332. Mg(2+)-binding residues include glutamate 431 and aspartate 455. Phosphoenolpyruvate-binding positions include 454–455 and arginine 465; that span reads ND. The active-site Proton donor is cysteine 502.

This sequence belongs to the PEP-utilizing enzyme family. In terms of assembly, homodimer. The cofactor is Mg(2+).

The protein localises to the cytoplasm. The enzyme catalyses L-histidyl-[protein] + phosphoenolpyruvate = N(pros)-phospho-L-histidyl-[protein] + pyruvate. General (non sugar-specific) component of the phosphoenolpyruvate-dependent sugar phosphotransferase system (sugar PTS). This major carbohydrate active-transport system catalyzes the phosphorylation of incoming sugar substrates concomitantly with their translocation across the cell membrane. Enzyme I transfers the phosphoryl group from phosphoenolpyruvate (PEP) to the phosphoryl carrier protein (HPr). The polypeptide is Phosphoenolpyruvate-protein phosphotransferase (ptsI) (Buchnera aphidicola subsp. Baizongia pistaciae (strain Bp)).